Consider the following 308-residue polypeptide: MAEENLELSLLCTESNVDDEGMIVDETPIEISIPQMGFSQSESEEIIMEMVEKEKQHLPSDDYIKRLRSGDLDLNVGRRDALNWIWKACEVHQFGPLCFCLAMNYLDRFLSVHDLPSGKGWILQLLAVACLSLAAKIEETEVPMLIDLQVGDPQFVFEAKSVQRMELLVLNKLKWRLRAITPCSYIRYFLRKMSKCDQEPSNTLISRSLQVIASTTKGIDFLEFRPSEVAAAVALSVSGELQRVHFDNSSFSPLFSLLQKERVKKIGEMIESDGSDLCSQTPNGVLEVSACCFSFKTHDSSSSYTHLS.

It belongs to the cyclin family. Cyclin D subfamily. Interacts with CDKA-1, CDKB2-1, KRP4/ICK7, KRP5/ICK3, KRP6/ICK4 and KRP7/ICK5. Expressed in shoot apical meristem, leaf primordia vascular tissues and tapetum of anthers.

Functionally, may activate cell cycle in the root apical meristem (RAM) and promote embryonic root (radicle) protrusion. This is Cyclin-D4-1 (CYCD4-1) from Arabidopsis thaliana (Mouse-ear cress).